We begin with the raw amino-acid sequence, 1350 residues long: ABC transporter C family member 13 (1350 aa).

The region spanning 107–390 (NKKSIFIVIL…LPEAIHNLLG (284 aa)) is the ABC transmembrane type-1 1 domain. A run of 4 helical transmembrane segments spans residues 111–131 (IFIVILCAIFSILSPLCLKYF), 143–163 (TFLTGLGYCVLLFVGTFSYTL), 215–235 (IGLFADFFWIGHLEIIIFPIQ), and 240–260 (LALLCWIVGWSGLVGFGVMII). The disordered stretch occupies residues 462–481 (EKSEEEYETTTTTTDDNNNN). The segment covering 470-481 (TTTTTTDDNNNN) has biased composition (low complexity). One can recognise an ABC transporter 1 domain in the interval 473–693 (TTTDDNNNNN…IDFESIMKTK (221 aa)). 505 to 512 (GVVGSGKT) serves as a coordination point for ATP. The 288-residue stretch at 774–1061 (KHGSSTFFFI…FVELEVKMNS (288 aa)) folds into the ABC transmembrane type-1 2 domain. Helical transmembrane passes span 776–796 (GSSTFFFIATCVVYFFSQAIF), 816–836 (DSFYIFYYIIFIGLFIVTLVI), 887–907 (IDLLLYDLFSDVLYCGSTVVF), 909–929 (ICVMIYISPLISLPFLVLIIV), 1003–1023 (IGVRLEFISALVVFLTAFFSL), and 1029–1049 (GFSVLSVTTAIGMCTYLNWAV). An ABC transporter 2 domain is found at 1103–1337 (IEFRDVEIRY…KNSKFSKLVK (235 aa)). Residue 1137–1144 (GRTGAGKS) coordinates ATP.

This sequence belongs to the ABC transporter superfamily. ABCC family. Conjugate transporter (TC 3.A.1.208) subfamily.

It localises to the membrane. The chain is ABC transporter C family member 13 (abcC13) from Dictyostelium discoideum (Social amoeba).